A 741-amino-acid polypeptide reads, in one-letter code: 1,4-alpha-glucan branching enzyme GlgB (741 aa).

Aspartate 420 (nucleophile) is an active-site residue. Glutamate 473 acts as the Proton donor in catalysis.

The protein belongs to the glycosyl hydrolase 13 family. GlgB subfamily. In terms of assembly, monomer.

The enzyme catalyses Transfers a segment of a (1-&gt;4)-alpha-D-glucan chain to a primary hydroxy group in a similar glucan chain.. It functions in the pathway glycan biosynthesis; glycogen biosynthesis. Its function is as follows. Catalyzes the formation of the alpha-1,6-glucosidic linkages in glycogen by scission of a 1,4-alpha-linked oligosaccharide from growing alpha-1,4-glucan chains and the subsequent attachment of the oligosaccharide to the alpha-1,6 position. This chain is 1,4-alpha-glucan branching enzyme GlgB, found in Pseudomonas syringae pv. syringae (strain B728a).